The following is a 257-amino-acid chain: Transcriptional regulatory protein TrcR (257 aa).

Positions 33 to 147 (RVLLVDDEPA…ELVARLRGLL (115 aa)) constitute a Response regulatory domain. The residue at position 82 (Asp82) is a 4-aspartylphosphate. A DNA-binding region (ompR/PhoB-type) is located at residues 158-255 (DEALRVGDLT…VRGIGYMLRP (98 aa)).

Phosphorylated by TrcS.

In terms of biological role, member of the two-component regulatory system TrcS/TrcR. Activates its own expression by binding specifically to the AT-rich sequence of the trcR promoter region. Also negatively regulates the expression of Rv1057 by binding to an AT-rich sequences within the Rv1057 upstream sequence. The TrcR-TrcS regulatory system may act as a transition regulatory system involved in adapting to an intracellular environment and transitioning from latency to reactivation. The polypeptide is Transcriptional regulatory protein TrcR (Mycobacterium tuberculosis (strain ATCC 25618 / H37Rv)).